The chain runs to 226 residues: Urease accessory protein UreF (226 aa).

Belongs to the UreF family. UreD, UreF and UreG form a complex that acts as a GTP-hydrolysis-dependent molecular chaperone, activating the urease apoprotein by helping to assemble the nickel containing metallocenter of UreC. The UreE protein probably delivers the nickel.

Its subcellular location is the cytoplasm. Functionally, required for maturation of urease via the functional incorporation of the urease nickel metallocenter. The chain is Urease accessory protein UreF from Burkholderia cenocepacia (strain ATCC BAA-245 / DSM 16553 / LMG 16656 / NCTC 13227 / J2315 / CF5610) (Burkholderia cepacia (strain J2315)).